The chain runs to 292 residues: Phosphoribosylaminoimidazole-succinocarboxamide synthase (292 aa).

This sequence belongs to the SAICAR synthetase family.

The enzyme catalyses 5-amino-1-(5-phospho-D-ribosyl)imidazole-4-carboxylate + L-aspartate + ATP = (2S)-2-[5-amino-1-(5-phospho-beta-D-ribosyl)imidazole-4-carboxamido]succinate + ADP + phosphate + 2 H(+). The protein operates within purine metabolism; IMP biosynthesis via de novo pathway; 5-amino-1-(5-phospho-D-ribosyl)imidazole-4-carboxamide from 5-amino-1-(5-phospho-D-ribosyl)imidazole-4-carboxylate: step 1/2. In Elusimicrobium minutum (strain Pei191), this protein is Phosphoribosylaminoimidazole-succinocarboxamide synthase.